We begin with the raw amino-acid sequence, 205 residues long: Microtubule-associated protein Jupiter (205 aa).

Ser30 is modified (phosphoserine). Phosphothreonine occurs at positions 41, 98, and 102. Residues 124–135 (LISNSKGNYNGK) show a composition bias toward polar residues. The disordered stretch occupies residues 124-205 (LISNSKGNYN…PPGGYSSGLW (82 aa)). Residues 136–149 (SGSVSSASSSVSSS) are compositionally biased toward low complexity. Phosphoserine is present on residues Ser138 and Ser149. Residues 181-191 (PANNGSSQVIN) show a composition bias toward polar residues.

This sequence belongs to the MAP Jupiter family.

It localises to the nucleus. Its subcellular location is the cytoplasm. The protein localises to the cytoskeleton. The protein resides in the spindle. In terms of biological role, binds to all microtubule populations. The sequence is that of Microtubule-associated protein Jupiter from Drosophila virilis (Fruit fly).